The sequence spans 696 residues: Glycine--tRNA ligase beta subunit (696 aa).

Belongs to the class-II aminoacyl-tRNA synthetase family. As to quaternary structure, tetramer of two alpha and two beta subunits.

The protein resides in the cytoplasm. It carries out the reaction tRNA(Gly) + glycine + ATP = glycyl-tRNA(Gly) + AMP + diphosphate. This Oleidesulfovibrio alaskensis (strain ATCC BAA-1058 / DSM 17464 / G20) (Desulfovibrio alaskensis) protein is Glycine--tRNA ligase beta subunit.